Reading from the N-terminus, the 274-residue chain is 2,3,4,5-tetrahydropyridine-2,6-dicarboxylate N-succinyltransferase (274 aa).

Substrate is bound by residues R104 and D141.

This sequence belongs to the transferase hexapeptide repeat family. Homotrimer.

The protein resides in the cytoplasm. It catalyses the reaction (S)-2,3,4,5-tetrahydrodipicolinate + succinyl-CoA + H2O = (S)-2-succinylamino-6-oxoheptanedioate + CoA. It functions in the pathway amino-acid biosynthesis; L-lysine biosynthesis via DAP pathway; LL-2,6-diaminopimelate from (S)-tetrahydrodipicolinate (succinylase route): step 1/3. The polypeptide is 2,3,4,5-tetrahydropyridine-2,6-dicarboxylate N-succinyltransferase (Escherichia coli O6:H1 (strain CFT073 / ATCC 700928 / UPEC)).